Consider the following 275-residue polypeptide: 3-oxo-isoapionate decarboxylase (275 aa).

It catalyses the reaction 3-oxoisoapionate + H(+) = L-erythrulose + CO2. Its pathway is carbohydrate metabolism. Functionally, involved in catabolism of D-apiose. Catalyzes decarboxylation of 3-oxo-isoapionate to L-erythrulose. In Pectobacterium atrosepticum (strain SCRI 1043 / ATCC BAA-672) (Erwinia carotovora subsp. atroseptica), this protein is 3-oxo-isoapionate decarboxylase.